Reading from the N-terminus, the 603-residue chain is Cell division control protein 48 homolog B (603 aa).

Residues Gly63–Thr70 and Gly327–Thr334 each bind ATP.

The protein belongs to the AAA ATPase family.

The protein localises to the nucleus. The protein resides in the cytoplasm. It is found in the cytoskeleton. Its subcellular location is the phragmoplast. Its function is as follows. Probably functions in cell division and growth processes. Interacts with certain SNAREs as part of specialized membrane fusion events where vesicles from the same organelle fuse (homotypic fusion). The polypeptide is Cell division control protein 48 homolog B (CDC48B) (Arabidopsis thaliana (Mouse-ear cress)).